Here is a 497-residue protein sequence, read N- to C-terminus: Taxane 10-beta-hydroxylase (497 aa).

Cys443 is a binding site for heme.

The protein belongs to the cytochrome P450 family. Requires heme as cofactor.

The enzyme catalyses taxa-4(20),11-dien-5alpha-yl acetate + reduced [NADPH--hemoprotein reductase] + O2 = 10beta-hydroxytaxa-4(20),11-dien-5alpha-yl acetate + oxidized [NADPH--hemoprotein reductase] + H2O + H(+). The protein operates within alkaloid biosynthesis; taxol biosynthesis; 10-deacetyl-2-debenzoylbaccatin III from taxa-4(20),11-dien-5alpha-ol: step 2/3. Its function is as follows. Involved in the transformation of a taxadienyl acetate by hydroxylation at C10 to yield taxadien-5-alpha-acetoxy-10-beta-ol. The polypeptide is Taxane 10-beta-hydroxylase (CYP725A1) (Taxus cuspidata (Japanese yew)).